A 274-amino-acid chain; its full sequence is Thiamine kinase (274 aa).

This sequence belongs to the thiamine kinase family.

The enzyme catalyses thiamine + ATP = thiamine phosphate + ADP + H(+). It functions in the pathway cofactor biosynthesis; thiamine diphosphate biosynthesis; thiamine phosphate from thiamine: step 1/1. In terms of biological role, catalyzes the ATP-dependent phosphorylation of thiamine to thiamine phosphate. Is involved in thiamine salvage. This Escherichia coli O6:K15:H31 (strain 536 / UPEC) protein is Thiamine kinase.